We begin with the raw amino-acid sequence, 58 residues long: Large ribosomal subunit protein bL32 (58 aa).

The segment covering 1-15 (MAVPKKKTSKAKRNQ) has biased composition (basic residues). Residues 1-23 (MAVPKKKTSKAKRNQRSATWKGK) form a disordered region.

The protein belongs to the bacterial ribosomal protein bL32 family.

The protein is Large ribosomal subunit protein bL32 of Synechococcus sp. (strain CC9902).